A 440-amino-acid chain; its full sequence is Beta-1,3-galactosyl-O-glycosyl-glycoprotein beta-1,6-N-acetylglucosaminyltransferase (440 aa).

The Cytoplasmic portion of the chain corresponds to 1 to 12 (MKMAGWKKKLCR). A helical; Signal-anchor for type II membrane protein membrane pass occupies residues 13–30 (GHHLWALGCYMLLAVVSL). The Lumenal portion of the chain corresponds to 31 to 440 (RLSLRFKCDV…RHKAIYGTEL (410 aa)). 2 N-linked (GlcNAc...) asparagine; by host glycosylation sites follow: N72 and N108. 4 disulfide bridges follow: C73–C230, C164–C384, C185–C212, and C393–C425.

It belongs to the glycosyltransferase 14 family.

The protein resides in the host Golgi apparatus membrane. The enzyme catalyses a 3-O-[beta-D-galactosyl-(1-&gt;3)-N-acetyl-alpha-D-galactosaminyl]-L-seryl-[protein] + UDP-N-acetyl-alpha-D-glucosamine = 3-O-{beta-D-galactosyl-(1-&gt;3)-[N-acetyl-beta-D-glucosaminyl-(1-&gt;6)]-N-acetyl-alpha-D-galactosaminyl}-L-seryl-[protein] + UDP + H(+). The catalysed reaction is a 3-O-[beta-D-galactosyl-(1-&gt;3)-N-acetyl-alpha-D-galactosaminyl]-L-threonyl-[protein] + UDP-N-acetyl-alpha-D-glucosamine = a 3-O-{beta-D-galactosyl-(1-&gt;3)-[N-acetyl-beta-D-glucosaminyl-(1-&gt;6)]-N-acetyl-alpha-D-galactosaminyl}-L-threonyl-[protein] + UDP + H(+). It carries out the reaction a beta-D-Gal-(1-&gt;4)-beta-D-GlcNAc-(1-&gt;3)-beta-D-Gal-(1-&gt;4)-beta-D-GlcNAc derivative + UDP-N-acetyl-alpha-D-glucosamine = a beta-D-Gal-(1-&gt;4)-beta-D-GlcNAc-(1-&gt;3)-[beta-D-GlcNAc-(1-&gt;6)]-beta-D-Gal-(1-&gt;4)-N-acetyl-beta-D-glucosaminyl derivative + UDP + H(+). It catalyses the reaction 3-O-[N-acetyl-beta-D-glucosaminyl-(1-&gt;3)-N-acetyl-alpha-D-galactosaminyl]-L-seryl-[protein] + UDP-N-acetyl-alpha-D-glucosamine = 3-O-[N-acetyl-beta-D-glucosaminyl-(1-&gt;3)-[N-acetyl-beta-D-glucosaminyl-(1-&gt;6)]-N-acetyl-alpha-D-galactosaminyl]-L-seryl-[protein] + UDP + H(+). The enzyme catalyses a 3-O-[N-acetyl-beta-D-glucosaminyl-(1-&gt;3)-N-acetyl-alpha-D-galactosaminyl]-L-threonyl-[protein] + UDP-N-acetyl-alpha-D-glucosamine = 3-O-[N-acetyl-beta-D-glucosaminyl-(1-&gt;3)-[N-acetyl-beta-D-glucosaminyl-(1-&gt;6)]-N-acetyl-alpha-D-galactosaminyl]-L-threonyl-[protein] + UDP + H(+). It participates in protein modification; protein glycosylation. Non-essential glycosyltransferase that can synthesize all known mucin beta 6 N-acetylglucosaminides. Mediates core 2 and core 4 O-glycan branching, 2 important steps in mucin-type biosynthesis. Has also I-branching enzyme activity by converting linear into branched poly-N-acetyllactosaminoglycans. Contributes to the post-translational modifications of structural proteins. This is Beta-1,3-galactosyl-O-glycosyl-glycoprotein beta-1,6-N-acetylglucosaminyltransferase (Bo17) from Bos taurus (Bovine).